The primary structure comprises 619 residues: Zinc finger protein 668 (619 aa).

An N-acetylmethionine modification is found at Met-1. Ser-10 bears the Phosphoserine mark. The C2H2-type 1 zinc-finger motif lies at 22-44 (YKCLFCTKTFPNAPRAARHAATH). The segment at 36-74 (RAARHAATHTPTDCTEEVREAQPKVDTEPKAEEASGDKV) is disordered. Residues 51 to 71 (EEVREAQPKVDTEPKAEEASG) are compositionally biased toward basic and acidic residues. Glycyl lysine isopeptide (Lys-Gly) (interchain with G-Cter in SUMO2) cross-links involve residues Lys-59, Lys-65, and Lys-80. C2H2-type zinc fingers lie at residues 84-106 (YACP…GRSH), 112-134 (FPCP…LASH), 140-162 (FRCT…QRGH), 168-190 (YACP…RRTH), 196-218 (YSCE…ERSH), 224-246 (FLCS…QRIH), 252-274 (YRCP…ERTH), 280-302 (FLCP…QRAH), 308-330 (YRCE…RRVH), 336-358 (FKCL…ALVH), and 364-386 (FRCE…SRMH). Residue Lys-154 forms a Glycyl lysine isopeptide (Lys-Gly) (interchain with G-Cter in SUMO2) linkage. At Ser-387 the chain carries Phosphoserine. The C2H2-type 13 zinc-finger motif lies at 392 to 414 (FHCNACGKSFVVLSSLRKHERTH). Residues 491–513 (VGEAPSTLGDAGEVGGEETDEKP) are disordered. Lys-512 participates in a covalent cross-link: Glycyl lysine isopeptide (Lys-Gly) (interchain with G-Cter in SUMO2). 3 consecutive C2H2-type zinc fingers follow at residues 516–538 (FVCR…ERSH), 544–566 (FPCT…SRTH), and 572–594 (YSCS…ERTH).

The protein belongs to the krueppel C2H2-type zinc-finger protein family.

Its subcellular location is the nucleus. In terms of biological role, may be involved in transcriptional regulation. May play a role in DNA repair process. This chain is Zinc finger protein 668 (Znf668), found in Mus musculus (Mouse).